The primary structure comprises 457 residues: Nuclear distribution protein PAC1 (457 aa).

Residues 73-106 (SSIVRLQRRIIELEKEIQELTDENENLRENGPSS) adopt a coiled-coil conformation. WD repeat units lie at residues 126 to 165 (SAGA…MPVA), 169 to 211 (AHMR…LQLI), 216 to 257 (GHEH…CLKS), 260 to 299 (PHTE…SFGT), 322 to 362 (SHRF…FVAH), 382 to 419 (GHSS…VVRS), and 423 to 457 (LHSG…ILMK).

This sequence belongs to the WD repeat LIS1/nudF family. Self-associates. Interacts with NDL1 and dynein.

It is found in the cytoplasm. The protein resides in the cytoskeleton. It localises to the spindle pole. Functionally, positively regulates the activity of the minus-end directed microtubule motor protein dynein. Plays a central role in positioning the mitotic spindle at the bud neck during cell division. Targets cytoplasmic dynein to microtubule plus ends, thereby promoting dynein-mediated microtubule sliding along the bud cortex and consequently the movement of the mitotic spindle to the bud neck. The protein is Nuclear distribution protein PAC1 of Lachancea thermotolerans (strain ATCC 56472 / CBS 6340 / NRRL Y-8284) (Yeast).